The chain runs to 206 residues: FMN-dependent NADH:quinone oxidoreductase (206 aa).

Residues serine 9, 15 to 17 (SVS), 95 to 98 (MYNF), and 139 to 142 (SRGG) each bind FMN.

This sequence belongs to the azoreductase type 1 family. Homodimer. Requires FMN as cofactor.

It catalyses the reaction 2 a quinone + NADH + H(+) = 2 a 1,4-benzosemiquinone + NAD(+). It carries out the reaction N,N-dimethyl-1,4-phenylenediamine + anthranilate + 2 NAD(+) = 2-(4-dimethylaminophenyl)diazenylbenzoate + 2 NADH + 2 H(+). Functionally, quinone reductase that provides resistance to thiol-specific stress caused by electrophilic quinones. Also exhibits azoreductase activity. Catalyzes the reductive cleavage of the azo bond in aromatic azo compounds to the corresponding amines. The chain is FMN-dependent NADH:quinone oxidoreductase from Legionella pneumophila subsp. pneumophila (strain Philadelphia 1 / ATCC 33152 / DSM 7513).